The sequence spans 238 residues: Small ribosomal subunit protein uS2 (238 aa).

Belongs to the universal ribosomal protein uS2 family.

This chain is Small ribosomal subunit protein uS2, found in Prochlorococcus marinus (strain SARG / CCMP1375 / SS120).